An 80-amino-acid chain; its full sequence is uncharacterized protein (80 aa).

This is an uncharacterized protein from Acidianus filamentous virus 1 (isolate United States/Yellowstone) (AFV-1).